The primary structure comprises 179 residues: ATP synthase subunit delta (179 aa).

This sequence belongs to the ATPase delta chain family. In terms of assembly, F-type ATPases have 2 components, F(1) - the catalytic core - and F(0) - the membrane proton channel. F(1) has five subunits: alpha(3), beta(3), gamma(1), delta(1), epsilon(1). F(0) has three main subunits: a(1), b(2) and c(10-14). The alpha and beta chains form an alternating ring which encloses part of the gamma chain. F(1) is attached to F(0) by a central stalk formed by the gamma and epsilon chains, while a peripheral stalk is formed by the delta and b chains.

The protein resides in the cell membrane. In terms of biological role, f(1)F(0) ATP synthase produces ATP from ADP in the presence of a proton or sodium gradient. F-type ATPases consist of two structural domains, F(1) containing the extramembraneous catalytic core and F(0) containing the membrane proton channel, linked together by a central stalk and a peripheral stalk. During catalysis, ATP synthesis in the catalytic domain of F(1) is coupled via a rotary mechanism of the central stalk subunits to proton translocation. Functionally, this protein is part of the stalk that links CF(0) to CF(1). It either transmits conformational changes from CF(0) to CF(1) or is implicated in proton conduction. The polypeptide is ATP synthase subunit delta (Clostridium botulinum (strain 657 / Type Ba4)).